The sequence spans 199 residues: Peroxynitrite isomerase (199 aa).

Positions 20–26 match the GXWXGXG motif; it reads GVWEGTG. Position 190 (histidine 190) interacts with heme b.

This sequence belongs to the nitrobindin family. As to quaternary structure, homodimer. The cofactor is heme b.

It carries out the reaction peroxynitrite = nitrate. It functions in the pathway nitrogen metabolism. In terms of biological role, heme-binding protein able to scavenge peroxynitrite and to protect free L-tyrosine against peroxynitrite-mediated nitration, by acting as a peroxynitrite isomerase that converts peroxynitrite to nitrate. Therefore, this protein likely plays a role in peroxynitrite sensing and in the detoxification of reactive nitrogen and oxygen species (RNS and ROS, respectively). Is able to bind nitric oxide (NO) in vitro, but may act as a sensor of peroxynitrite levels in vivo. The sequence is that of Peroxynitrite isomerase from Clavibacter michiganensis subsp. michiganensis (strain NCPPB 382).